Consider the following 327-residue polypeptide: Ribonucleoside-diphosphate reductase small chain (327 aa).

D70, E101, and H104 together coordinate Fe cation. Y108 is an active-site residue. Positions 164, 198, and 201 each coordinate Fe cation.

The protein belongs to the ribonucleoside diphosphate reductase small chain family. In terms of assembly, heterotetramer composed of a homodimer of the large subunit (R1) and a homodimer of the small subunit (R2). Larger multisubunit protein complex are also active, composed of (R1)n(R2)n. It depends on Fe cation as a cofactor.

The catalysed reaction is a 2'-deoxyribonucleoside 5'-diphosphate + [thioredoxin]-disulfide + H2O = a ribonucleoside 5'-diphosphate + [thioredoxin]-dithiol. Its function is as follows. Ribonucleoside-diphosphate reductase holoenzyme provides the precursors necessary for viral DNA synthesis. Allows virus growth in non-dividing cells. Catalyzes the biosynthesis of deoxyribonucleotides from the corresponding ribonucleotides. The polypeptide is Ribonucleoside-diphosphate reductase small chain (Ornithodoros (relapsing fever ticks)).